Here is a 229-residue protein sequence, read N- to C-terminus: UPF0173 metal-dependent hydrolase RD1_1994 (229 aa).

It belongs to the UPF0173 family.

This chain is UPF0173 metal-dependent hydrolase RD1_1994, found in Roseobacter denitrificans (strain ATCC 33942 / OCh 114) (Erythrobacter sp. (strain OCh 114)).